The following is an 87-amino-acid chain: Large ribosomal subunit protein eL31 (87 aa).

This sequence belongs to the eukaryotic ribosomal protein eL31 family.

The chain is Large ribosomal subunit protein eL31 from Methanosphaerula palustris (strain ATCC BAA-1556 / DSM 19958 / E1-9c).